Reading from the N-terminus, the 455-residue chain is UDP-N-acetylmuramoylalanine--D-glutamate ligase (455 aa).

Position 120-126 (120-126 (GSNGKTT)) interacts with ATP.

Belongs to the MurCDEF family.

The protein resides in the cytoplasm. It carries out the reaction UDP-N-acetyl-alpha-D-muramoyl-L-alanine + D-glutamate + ATP = UDP-N-acetyl-alpha-D-muramoyl-L-alanyl-D-glutamate + ADP + phosphate + H(+). It participates in cell wall biogenesis; peptidoglycan biosynthesis. Its function is as follows. Cell wall formation. Catalyzes the addition of glutamate to the nucleotide precursor UDP-N-acetylmuramoyl-L-alanine (UMA). In Pediococcus pentosaceus (strain ATCC 25745 / CCUG 21536 / LMG 10740 / 183-1w), this protein is UDP-N-acetylmuramoylalanine--D-glutamate ligase.